The sequence spans 342 residues: Large ribosomal subunit protein uL10 (342 aa).

Residues 212–342 (EYIDMLQKAY…ALAGLSALFG (131 aa)) form a required for interaction with ribosomal protein L12 dimers region. Polar residues predominate over residues 299 to 308 (QAQVAVATQP). Residues 299 to 342 (QAQVAVATQPSEEEKKEEEKTEEEEKEEEASEEEALAGLSALFG) form a disordered region. The span at 318-333 (KTEEEEKEEEASEEEA) shows a compositional bias: acidic residues.

The protein belongs to the universal ribosomal protein uL10 family. As to quaternary structure, part of the 50S ribosomal subunit, binds large rRNA. Forms the ribosomal stalk which helps the ribosome interact with GTP-bound translation factors. Forms a heptameric L10(L12)2(L12)2(L12)2 complex, where L10 forms an elongated spine to which the L12 dimers bind in a sequential fashion.

Its function is as follows. Forms the large subunit's ribosomal stalk, playing a central role in the interaction of the ribosome with elongation factors; the stalk complex of P.horikoshii binds to E.coli large subunits and confers on them the ability to interact with eukaryotic elongation factors. Each succesive L12 dimer bound along the P0 spine increases the GTPase activity of elongation factors and increases translation by reconsituted ribosomes, although the first site is the most stimulatory. This Pyrococcus horikoshii (strain ATCC 700860 / DSM 12428 / JCM 9974 / NBRC 100139 / OT-3) protein is Large ribosomal subunit protein uL10.